A 422-amino-acid polypeptide reads, in one-letter code: UDP-N-acetylglucosamine 1-carboxyvinyltransferase (422 aa).

Residue 22 to 23 (KN) coordinates phosphoenolpyruvate. R93 provides a ligand contact to UDP-N-acetyl-alpha-D-glucosamine. C117 (proton donor) is an active-site residue. Position 117 is a 2-(S-cysteinyl)pyruvic acid O-phosphothioketal (C117). UDP-N-acetyl-alpha-D-glucosamine-binding positions include 122 to 126 (RPVDQ), D305, and I327.

Belongs to the EPSP synthase family. MurA subfamily.

The protein localises to the cytoplasm. It carries out the reaction phosphoenolpyruvate + UDP-N-acetyl-alpha-D-glucosamine = UDP-N-acetyl-3-O-(1-carboxyvinyl)-alpha-D-glucosamine + phosphate. It participates in cell wall biogenesis; peptidoglycan biosynthesis. Its function is as follows. Cell wall formation. Adds enolpyruvyl to UDP-N-acetylglucosamine. This is UDP-N-acetylglucosamine 1-carboxyvinyltransferase from Bordetella petrii (strain ATCC BAA-461 / DSM 12804 / CCUG 43448).